Here is a 335-residue protein sequence, read N- to C-terminus: Zinc-type alcohol dehydrogenase-like protein SAS2087 (335 aa).

The protein belongs to the zinc-containing alcohol dehydrogenase family. Quinone oxidoreductase subfamily.

The protein is Zinc-type alcohol dehydrogenase-like protein SAS2087 of Staphylococcus aureus (strain MSSA476).